A 428-amino-acid chain; its full sequence is MAAVTYPSSVPTTLDPGNASSAWPLDTSLGNASAGTSLAGLAVSGILISLVYLVVCVVGLLGNSLVIYVVLRHTSSPSVTSVYILNLALADELFMLGLPFLAAQNALSYWPFGSLMCRLVMAVDGINQFTSIFCLTVMSVDRYLAVVHPTRSARWRTAPVARMVSAAVWVASAVVVLPVVVFSGVPRGMSTCHMQWPEPAAAWRTAFIIYTAALGFFGPLLVICLCYLLIVVKVRSTTRRVRAPSCQWVQAPACQRRRRSERRVTRMVVAVVALFVLCWMPFYLLNIVNVVCPLPEEPAFFGLYFLVVALPYANSCANPILYGFLSYRFKQGFRRILLRPSRRVRSQEPGSGPPEKTEEEEDEEEEERREEEERRMQRGQEMNGRLSQIAQPGPSGQQQRPCTGTAKEQQLLPQEATAGDKASTLSHL.

Over 1-45 the chain is Extracellular; the sequence is MAAVTYPSSVPTTLDPGNASSAWPLDTSLGNASAGTSLAGLAVSG. 2 N-linked (GlcNAc...) asparagine glycosylation sites follow: asparagine 18 and asparagine 31. A helical transmembrane segment spans residues 46-71; sequence ILISLVYLVVCVVGLLGNSLVIYVVL. Topologically, residues 72 to 81 are cytoplasmic; that stretch reads RHTSSPSVTS. Residues 82-103 form a helical membrane-spanning segment; it reads VYILNLALADELFMLGLPFLAA. The Extracellular portion of the chain corresponds to 104–118; it reads QNALSYWPFGSLMCR. The cysteines at positions 117 and 192 are disulfide-linked. A helical membrane pass occupies residues 119-140; the sequence is LVMAVDGINQFTSIFCLTVMSV. Over 141 to 162 the chain is Cytoplasmic; the sequence is DRYLAVVHPTRSARWRTAPVAR. Residues 163–182 traverse the membrane as a helical segment; sequence MVSAAVWVASAVVVLPVVVF. Topologically, residues 183 to 206 are extracellular; that stretch reads SGVPRGMSTCHMQWPEPAAAWRTA. A helical membrane pass occupies residues 207–232; the sequence is FIIYTAALGFFGPLLVICLCYLLIVV. The Cytoplasmic segment spans residues 233-266; sequence KVRSTTRRVRAPSCQWVQAPACQRRRRSERRVTR. The helical transmembrane segment at 267–288 threads the bilayer; sequence MVVAVVALFVLCWMPFYLLNIV. The Extracellular portion of the chain corresponds to 289–302; the sequence is NVVCPLPEEPAFFG. Residues 303-325 traverse the membrane as a helical segment; sequence LYFLVVALPYANSCANPILYGFL. Residues 326–428 lie on the Cytoplasmic side of the membrane; it reads SYRFKQGFRR…GDKASTLSHL (103 aa). Serine 341, serine 346, and serine 351 each carry phosphoserine. Residues 343–428 are disordered; sequence RVRSQEPGSG…GDKASTLSHL (86 aa). Phosphothreonine is present on threonine 357. Acidic residues predominate over residues 357 to 370; the sequence is TEEEEDEEEEERRE. Residues 385–412 are compositionally biased toward polar residues; it reads RLSQIAQPGPSGQQQRPCTGTAKEQQLL.

The protein belongs to the G-protein coupled receptor 1 family. As to quaternary structure, homodimer and heterodimer with SSTR2. Heterodimerization with SSTR2 inactivates SSTR3 receptor function. Phosphorylated. Phosphorylation increases upon somatostatin binding. In terms of tissue distribution, densely expressed in cerebellum and at moderate levels in the amygdala, cortex, striatum, spleen, liver and pituitary.

The protein resides in the cell membrane. In terms of biological role, receptor for somatostatin-14 and -28. This receptor is coupled via pertussis toxin sensitive G proteins to inhibition of adenylyl cyclase. This is Somatostatin receptor type 3 (Sstr3) from Rattus norvegicus (Rat).